Consider the following 430-residue polypeptide: Enolase (430 aa).

Q163 contributes to the (2R)-2-phosphoglycerate binding site. The active-site Proton donor is the E205. Mg(2+)-binding residues include D242, E287, and D314. Residues K339, R368, S369, and K390 each coordinate (2R)-2-phosphoglycerate. The active-site Proton acceptor is K339.

Belongs to the enolase family. Mg(2+) is required as a cofactor.

The protein localises to the cytoplasm. It localises to the secreted. Its subcellular location is the cell surface. The catalysed reaction is (2R)-2-phosphoglycerate = phosphoenolpyruvate + H2O. Its pathway is carbohydrate degradation; glycolysis; pyruvate from D-glyceraldehyde 3-phosphate: step 4/5. Its function is as follows. Catalyzes the reversible conversion of 2-phosphoglycerate (2-PG) into phosphoenolpyruvate (PEP). It is essential for the degradation of carbohydrates via glycolysis. This chain is Enolase, found in Alkaliphilus metalliredigens (strain QYMF).